The primary structure comprises 414 residues: Wilms tumor protein homolog A (414 aa).

Residues K55 and K158 each participate in a glycyl lysine isopeptide (Lys-Gly) (interchain with G-Cter in SUMO) cross-link. Positions 217–225 (MTWNQMNLG) match the 9aaTAD motif. 3 consecutive C2H2-type zinc fingers follow at residues 288–312 (FMCA…SRKH), 318–342 (YQCD…QRRH), and 348–370 (FQCK…TRTH). Important for interaction with target DNA regions lie at residues 332-346 (SDQL…TGIK) and 358-366 (SRSDHLKTH). Positions 373–375 (KTS) match the KTS motif motif. Residues 379-403 (FSCRWPSCQKKFARSDELVRHHNMH) form a C2H2-type 4 zinc finger.

Belongs to the EGR C2H2-type zinc-finger protein family. Expressed around the pronephric anlage and in the pronephros; expression is restricted to the splanchnic mesoderm (the site where the glomus forms) from tailbud stages, and the glomus of early tadpoles. Not expressed in the pronephric tubules or pronephric duct. In tadpoles (stage 38-39), additional expression begins in the heart. Also expressed in the adult kidney (mesonephros).

The protein localises to the nucleus. It localises to the cytoplasm. It is found in the nucleus speckle. Functionally, transcription factor required for development of the vascular component of the pronephric kidney, the glomus; may repress tubule-specific gene expression in the portion of the pronephros fated to form the glomus. Recognizes and binds to the DNA sequence 5'-GCG(T/G)GGGCG-3'. Inhibits Wnt-signaling during embryonic development. Function may be isoform-specific: the isoform containing the KTS motif is less effective in inhibiting wnt signaling. The sequence is that of Wilms tumor protein homolog A (wt1-a) from Xenopus laevis (African clawed frog).